The primary structure comprises 534 residues: Cytidylyl-2-hydroxyethylphosphonate methyltransferase (534 aa).

A B12-binding domain is found at 38–195 (KVLLLNPSAT…EHLNGNVSDD (158 aa)). The 229-residue stretch at 268–496 (TVGSRVGQLY…TYKQGIINVP (229 aa)) folds into the Radical SAM core domain. [4Fe-4S] cluster-binding residues include Cys282, Cys286, and Cys289.

It belongs to the radical SAM superfamily. [4Fe-4S] cluster is required as a cofactor. Requires methylcob(III)alamin as cofactor.

The enzyme catalyses cytidine 5'-{[hydroxy(2-hydroxyethyl)phosphonoyl]phosphate} + AH2 + 2 S-adenosyl-L-methionine = cytidine 5'-({hydroxy[(S)-2-hydroxypropyl]phosphonoyl}phosphate) + 5'-deoxyadenosine + L-methionine + A + S-adenosyl-L-homocysteine + 2 H(+). It functions in the pathway antibiotic biosynthesis; fosfomycin biosynthesis. Its function is as follows. Involved in fosfomycin biosynthesis. Catalyzes the C-methylation of cytidylyl-2-hydroxyethylphosphonate (HEP-CMP) to form cytidylyl-2-hydroxypropylphosphonate (HPP-CMP). The C-methylation is not stereoselective and the ratio of (S)- to (R)-HPP-CMP is almost equal in vitro. The protein is Cytidylyl-2-hydroxyethylphosphonate methyltransferase of Streptomyces wedmorensis.